A 245-amino-acid chain; its full sequence is Orotidine 5'-phosphate decarboxylase (245 aa).

Substrate contacts are provided by residues D22, K44, 71 to 80 (DLKFHDIPNT), T131, R192, Q201, G221, and R222. K73 acts as the Proton donor in catalysis.

Belongs to the OMP decarboxylase family. Type 1 subfamily. As to quaternary structure, homodimer.

The catalysed reaction is orotidine 5'-phosphate + H(+) = UMP + CO2. It participates in pyrimidine metabolism; UMP biosynthesis via de novo pathway; UMP from orotate: step 2/2. Functionally, catalyzes the decarboxylation of orotidine 5'-monophosphate (OMP) to uridine 5'-monophosphate (UMP). The sequence is that of Orotidine 5'-phosphate decarboxylase from Salmonella typhimurium (strain LT2 / SGSC1412 / ATCC 700720).